Reading from the N-terminus, the 317-residue chain is Methionyl-tRNA formyltransferase (317 aa).

112–115 (SLLP) is a (6S)-5,6,7,8-tetrahydrofolate binding site.

Belongs to the Fmt family.

The enzyme catalyses L-methionyl-tRNA(fMet) + (6R)-10-formyltetrahydrofolate = N-formyl-L-methionyl-tRNA(fMet) + (6S)-5,6,7,8-tetrahydrofolate + H(+). In terms of biological role, attaches a formyl group to the free amino group of methionyl-tRNA(fMet). The formyl group appears to play a dual role in the initiator identity of N-formylmethionyl-tRNA by promoting its recognition by IF2 and preventing the misappropriation of this tRNA by the elongation apparatus. In Mycoplasma mycoides subsp. mycoides SC (strain CCUG 32753 / NCTC 10114 / PG1), this protein is Methionyl-tRNA formyltransferase.